The sequence spans 444 residues: Protein translocase subunit SecY (444 aa).

Helical transmembrane passes span 24 to 44 (FFVI…IPGI), 77 to 97 (ILAL…LLTV), 123 to 143 (GTLV…PNMV), 153 to 173 (MFTL…MWLG), 181 to 201 (IGNG…PKAI), 215 to 235 (VLLL…VVFM), 269 to 289 (MAGV…GTLA), 318 to 338 (YVML…ALVF), 376 to 396 (LAGA…MVAW), and 400 to 420 (FYFG…FMAQ).

This sequence belongs to the SecY/SEC61-alpha family. In terms of assembly, component of the Sec protein translocase complex. Heterotrimer consisting of SecY, SecE and SecG subunits. The heterotrimers can form oligomers, although 1 heterotrimer is thought to be able to translocate proteins. Interacts with the ribosome. Interacts with SecDF, and other proteins may be involved. Interacts with SecA.

The protein resides in the cell inner membrane. In terms of biological role, the central subunit of the protein translocation channel SecYEG. Consists of two halves formed by TMs 1-5 and 6-10. These two domains form a lateral gate at the front which open onto the bilayer between TMs 2 and 7, and are clamped together by SecE at the back. The channel is closed by both a pore ring composed of hydrophobic SecY resides and a short helix (helix 2A) on the extracellular side of the membrane which forms a plug. The plug probably moves laterally to allow the channel to open. The ring and the pore may move independently. The chain is Protein translocase subunit SecY from Vibrio cholerae serotype O1 (strain ATCC 39315 / El Tor Inaba N16961).